A 610-amino-acid polypeptide reads, in one-letter code: L-galactono-1,4-lactone dehydrogenase, mitochondrial (610 aa).

Residues 1-35 constitute a mitochondrion transit peptide; that stretch reads MLRSLLLRRSVGHSLGTLSPSSSTIRSSFSPHRTL. The tract at residues 17–61 is disordered; sequence TLSPSSSTIRSSFSPHRTLCTTGQTLTPPPPPPPRPPPPPPATAS. Residues 19–30 show a composition bias toward low complexity; that stretch reads SPSSSTIRSSFS. Residues 36–101 constitute a propeptide, removed in mature form; that stretch reads CTTGQTLTPP…AKHKKAQIFR (66 aa). Pro residues predominate over residues 43 to 58; sequence TPPPPPPPRPPPPPPA. The chain crosses the membrane as a helical span at residues 68 to 84; it reads YAGYAALAIFSGVATYF. Residues 123–258 form the FAD-binding PCMH-type domain; sequence TRNFNQPENL…TPAKGTIELS (136 aa).

FAD is required as a cofactor.

It localises to the mitochondrion membrane. The enzyme catalyses L-galactono-1,4-lactone + 4 Fe(III)-[cytochrome c] = L-dehydroascorbate + 4 Fe(II)-[cytochrome c] + 5 H(+). It catalyses the reaction L-gulono-1,4-lactone + 2 Fe(III)-[cytochrome c] = L-ascorbate + 2 Fe(II)-[cytochrome c] + 3 H(+). It functions in the pathway cofactor biosynthesis; L-ascorbate biosynthesis. In terms of biological role, involved in the biosynthesis of ascorbate. Catalyzes the final step of ascorbate biosynthesis. Uses L-galactono-1,4-lactone and L-gulono-1,4-lactone as substrates, but not D-galactono-1,4-lactone, D-gulono-1,4-lactone, L-mannono-1,4-lactone or D-galactonic acid. Also active with phenazine methosulfate and 1,4-benzoquinone as electron acceptors. Involved in the regulation of the accumulation of the mitochondrial respiratory complex I. Structural part of one of the plant-specific mitochondrial complex I assembly intermediates, lacking the whole distal (PD) module. Prevents the binding of the plant specific P1 protein (CPN60/HSP60), responsible for the linkage of the proximal (PP) to the distal (PD) module. The protein is L-galactono-1,4-lactone dehydrogenase, mitochondrial of Arabidopsis thaliana (Mouse-ear cress).